The sequence spans 782 residues: ATP-dependent 6-phosphofructokinase, muscle type (782 aa).

T2 is subject to N-acetylthreonine. The segment at 2–390 (THEEHHAAKT…NWEVYKLLAH (389 aa)) is N-terminal catalytic PFK domain 1. Residues G25, 88–89 (RC), and 118–121 (GDGS) each bind ATP. Residue D119 coordinates Mg(2+). S133 carries the post-translational modification Phosphoserine. Substrate is bound by residues 164–166 (SID), R201, 208–210 (MGR), E264, R292, and 298–301 (HVQR). D166 serves as the catalytic Proton acceptor. S377 is subject to Phosphoserine. An interdomain linker region spans residues 391-403 (IRPPVSKTSATMH). The C-terminal regulatory PFK domain 2 stretch occupies residues 404-782 (TVAVMNVGAP…SRKRSGETSI (379 aa)). Beta-D-fructose 2,6-bisphosphate-binding positions include R473 and 530-534 (TVSNN). O-linked (GlcNAc) serine glycosylation is present at S532. The residue at position 559 (K559) is an N6-(2-hydroxyisobutyryl)lysine. Beta-D-fructose 2,6-bisphosphate-binding positions include R568, 575-577 (MGG), E631, R657, and 663-666 (HMQQ). Position 669 is a phosphoserine (S669). R737 serves as a coordination point for beta-D-fructose 2,6-bisphosphate. S777 carries the post-translational modification Phosphoserine.

It belongs to the phosphofructokinase type A (PFKA) family. ATP-dependent PFK group I subfamily. Eukaryotic two domain clade 'E' sub-subfamily. Homo- and heterotetramers. Phosphofructokinase (PFK) enzyme functions as a tetramer composed of different combinations of 3 types of subunits, called PFKM (M), PFKL (L) and PFKP (P). The composition of the PFK tetramer differs according to the tissue type it is present in. The kinetic and regulatory properties of the tetrameric enzyme are dependent on the subunit composition, hence can vary across tissues. Interacts (via C-terminus) with HK1 (via N-terminal spermatogenic cell-specific region). Mg(2+) serves as cofactor. In terms of processing, glcNAcylation decreases enzyme activity.

The protein resides in the cytoplasm. The catalysed reaction is beta-D-fructose 6-phosphate + ATP = beta-D-fructose 1,6-bisphosphate + ADP + H(+). It functions in the pathway carbohydrate degradation; glycolysis; D-glyceraldehyde 3-phosphate and glycerone phosphate from D-glucose: step 3/4. Allosterically activated by ADP, AMP, or fructose 2,6-bisphosphate, and allosterically inhibited by ATP or citrate. Functionally, catalyzes the phosphorylation of D-fructose 6-phosphate to fructose 1,6-bisphosphate by ATP, the first committing step of glycolysis. This is ATP-dependent 6-phosphofructokinase, muscle type (PFKM) from Canis lupus familiaris (Dog).